Reading from the N-terminus, the 114-residue chain is Nucleoid-associated protein MAE_23910 (114 aa).

The protein belongs to the YbaB/EbfC family. As to quaternary structure, homodimer.

Its subcellular location is the cytoplasm. It localises to the nucleoid. Functionally, binds to DNA and alters its conformation. May be involved in regulation of gene expression, nucleoid organization and DNA protection. In Microcystis aeruginosa (strain NIES-843 / IAM M-2473), this protein is Nucleoid-associated protein MAE_23910.